Consider the following 861-residue polypeptide: MRMCAPVRGLFLALVVVLRTAVAFAPVPRLTWEHGEVGLVQFHKPGIFNYSALLMSEDKDTLYVGAREAVFAVNALNISEKQHEVYWKVSEDKKSKCAEKGKSKQTECLNYIRVLQPLSSTSLYVCGTNAFQPTCDHLNLTSFKFLGKSEDGKGRCPFDPAHSYTSVMVGGELYSGTSYNFLGSEPIISRNSSHSPLRTEYAIPWLNEPSFVFADVIQKSPDGPEGEDDKVYFFFTEVSVEYEFVFKLMIPRVARVCKGDQGGLRTLQKKWTSFLKARLICSKPDSGLVFNILQDVFVLRAPGLKEPVFYAVFTPQLNNVGLSAVCAYTLATVEAVFSRGKYMQSATVEQSHTKWVRYNGPVPTPRPGACIDSEARAANYTSSLNLPDKTLQFVKDHPLMDDSVTPIDNRPKLIKKDVNYTQIVVDRTQALDGTFYDVMFISTDRGALHKAVILTKEVHVIEETQLFRDSEPVLTLLLSSKKGRKFVYAGSNSGVVQAPLAFCEKHGSCEDCVLARDPYCAWSPAIKACVTLHQEEASSRGWIQDMSGDTSSCLDKSKESFNQHFFKHGGTAELKCFQKSNLARVVWKFQNGELKAASPKYGFVGRKHLLIFNLSDGDSGVYQCLSEERVRNKTVSQLLAKHVLEVKMVPRTPPSPTSEDAQTEGSKITSKMPVASTQGSSPPTPALWATSPRAATLPPKSSSGTSCEPKMVINTVPQLHSEKTVYLKSSDNRLLMSLLLFIFVLFLCLFSYNCYKGYLPGQCLKFRSALLLGKKTPKSDFSDLEQSVKETLVEPGSFSQQNGDHPKPALDTGYETEQDTITSKVPTDREDSQRIDELSARDKPFDVKCELKFADSDADGD.

The first 23 residues, Met-1 to Ala-23, serve as a signal peptide directing secretion. Residues Phe-24–Leu-500 form the Sema domain. Over Phe-24–Arg-733 the chain is Extracellular. Residues Asn-49 and Asn-77 are each glycosylated (N-linked (GlcNAc...) asparagine). 2 disulfides stabilise this stretch: Cys-97/Cys-108 and Cys-126/Cys-135. 2 N-linked (GlcNAc...) asparagine glycosylation sites follow: Asn-139 and Asn-191. 2 disulfides stabilise this stretch: Cys-257/Cys-370 and Cys-281/Cys-326. 2 N-linked (GlcNAc...) asparagine glycosylation sites follow: Asn-379 and Asn-419. The PSI domain maps to Phe-502–Ser-551. 4 disulfide bridges follow: Cys-503–Cys-520, Cys-509–Cys-553, Cys-512–Cys-529, and Cys-576–Cys-624. Positions Asp-555–Ser-636 constitute an Ig-like C2-type domain. N-linked (GlcNAc...) asparagine glycosylation is found at Asn-613 and Asn-632. Residues Val-649–Pro-709 are disordered. Residues Thr-657–Ser-681 show a composition bias toward polar residues. A helical transmembrane segment spans residues Leu-734 to Cys-754. Topologically, residues Tyr-755–Asp-861 are cytoplasmic. Phosphoserine is present on residues Ser-782 and Ser-832. The segment at Val-793–Ser-839 is disordered. Positions Pro-826–Ser-839 are enriched in basic and acidic residues.

It belongs to the semaphorin family. In terms of assembly, homodimer. Interacts with PLXNB1. Interacts with PLXNB2. Strongly expressed in lymphoid tissues, especially in the thymus, as well as in the nervous tissues. Expressed in neurons and glia in the developing hippocampus.

It localises to the cell membrane. Its function is as follows. Cell surface receptor for PLXNB1 and PLXNB2 that plays an important role in cell-cell signaling. Regulates GABAergic synapse development. Promotes the development of inhibitory synapses in a PLXNB1-dependent manner. Modulates the complexity and arborization of developing neurites in hippocampal neurons by activating PLXNB1 and interaction with PLXNB1 mediates activation of RHOA. Promotes the migration of cerebellar granule cells. Plays a role in the immune system; induces B-cells to aggregate and improves their viability (in vitro). Induces endothelial cell migration through the activation of PTK2B/PYK2, SRC, and the phosphatidylinositol 3-kinase-AKT pathway. In Mus musculus (Mouse), this protein is Semaphorin-4D (Sema4d).